Consider the following 876-residue polypeptide: GRB2-associated and regulator of MAPK protein 1 (876 aa).

The interval lysine 12–glutamate 320 is CABIT. Phosphotyrosine is present on residues tyrosine 105 and tyrosine 453. Residues isoleucine 496–serine 572 form a disordered region. The necessary for interaction with GRB2 stretch occupies residues glycine 498–proline 550. Over residues arginine 558–serine 572 the composition is skewed to polar residues. Phosphoserine occurs at positions 610 and 614. Disordered regions lie at residues tryptophan 626–asparagine 664 and alanine 738–serine 763. 2 stretches are compositionally biased toward polar residues: residues serine 631–serine 640 and arginine 648–proline 658. In terms of domain architecture, SAM spans leucine 811 to isoleucine 876.

It belongs to the GAREM family. In terms of assembly, isoform 1 interacts with EGFR. Isoform 1 interacts (via proline-rich domain and phosphorylated at Tyr-105 and Tyr-453) with GRB2 (via SH3 domains); the interaction occurs upon EGF stimulation. Isoform 1 interacts (phosphorylated at Tyr-453) with PTPN11; the interaction increases MAPK/ERK activity and does not affect the GRB2/SOS complex formation. Isoform 2 does not interact with GRB2. Post-translationally, on EGF stimulation, phosphorylated on Tyr-105 and Tyr-453. As to expression, isoform 1 is ubiquitously expressed.

Its function is as follows. Acts as an adapter protein that plays a role in intracellular signaling cascades triggered either by the cell surface activated epidermal growth factor receptor and/or cytoplasmic protein tyrosine kinases. Promotes activation of the MAPK/ERK signaling pathway. Plays a role in the regulation of cell proliferation. This is GRB2-associated and regulator of MAPK protein 1 (GAREM1) from Homo sapiens (Human).